The primary structure comprises 145 residues: D-aminoacyl-tRNA deacylase (145 aa).

Positions 137 to 138 match the Gly-cisPro motif, important for rejection of L-amino acids motif; that stretch reads GP.

Belongs to the DTD family. Homodimer.

It is found in the cytoplasm. The catalysed reaction is glycyl-tRNA(Ala) + H2O = tRNA(Ala) + glycine + H(+). It catalyses the reaction a D-aminoacyl-tRNA + H2O = a tRNA + a D-alpha-amino acid + H(+). In terms of biological role, an aminoacyl-tRNA editing enzyme that deacylates mischarged D-aminoacyl-tRNAs. Also deacylates mischarged glycyl-tRNA(Ala), protecting cells against glycine mischarging by AlaRS. Acts via tRNA-based rather than protein-based catalysis; rejects L-amino acids rather than detecting D-amino acids in the active site. By recycling D-aminoacyl-tRNA to D-amino acids and free tRNA molecules, this enzyme counteracts the toxicity associated with the formation of D-aminoacyl-tRNA entities in vivo and helps enforce protein L-homochirality. The polypeptide is D-aminoacyl-tRNA deacylase (Shigella dysenteriae serotype 1 (strain Sd197)).